The sequence spans 208 residues: Baseplate hub assembly protein gp26 (208 aa).

The propeptide occupies 1–5; the sequence is MYEYK.

It is found in the virion. Functionally, baseplate hub assembly chaperone involved in the tail assembly. This chain is Baseplate hub assembly protein gp26 (26), found in Escherichia coli (Bacteriophage T4).